The primary structure comprises 83 residues: Cytotoxin A5 (83 aa).

Positions 1–21 (MKTLLLTMVVVTIVCLDLGYT) are cleaved as a signal peptide. 4 disulfides stabilise this stretch: Cys24–Cys43, Cys36–Cys61, Cys65–Cys76, and Cys77–Cys82.

This sequence belongs to the three-finger toxin family. Short-chain subfamily. Orphan group XV sub-subfamily. Expressed by the venom gland.

It is found in the secreted. It localises to the target cell membrane. Functionally, non-cytotoxic protein that does not show lytic and hemolytic activities, but can induce aggregation and fusion of sphingomyelin vesicles. It binds to integrin alpha-V/beta-3 (ITGAV/ITGB3) with high affinity, and it inhibits osteoclast differentiation and bone resorption in mice, probably due to binding to integrin alpha-V/beta-3. The chain is Cytotoxin A5 from Naja atra (Chinese cobra).